The sequence spans 510 residues: 2,3-bisphosphoglycerate-independent phosphoglycerate mutase (510 aa).

Residues Asp12 and Ser62 each contribute to the Mn(2+) site. The active-site Phosphoserine intermediate is Ser62. Residues His123, 153–154 (RD), Arg185, Arg191, 260–263 (RPDR), and Lys335 contribute to the substrate site. Asp402, His406, Asp443, His444, and His461 together coordinate Mn(2+).

The protein belongs to the BPG-independent phosphoglycerate mutase family. In terms of assembly, monomer. Mn(2+) is required as a cofactor.

The enzyme catalyses (2R)-2-phosphoglycerate = (2R)-3-phosphoglycerate. It participates in carbohydrate degradation; glycolysis; pyruvate from D-glyceraldehyde 3-phosphate: step 3/5. Catalyzes the interconversion of 2-phosphoglycerate and 3-phosphoglycerate. The chain is 2,3-bisphosphoglycerate-independent phosphoglycerate mutase from Listeria innocua serovar 6a (strain ATCC BAA-680 / CLIP 11262).